Consider the following 512-residue polypeptide: D-alanine--D-alanyl carrier protein ligase (512 aa).

152-153 contacts ATP; sequence TS. Aspartate 199 is a binding site for D-alanine. Residue 294–299 coordinates ATP; the sequence is NAYGPT. Valine 303 is a binding site for D-alanine. ATP is bound by residues aspartate 385, 397-400, and lysine 499; that span reads YGGR. D-alanine is bound at residue lysine 499.

It belongs to the ATP-dependent AMP-binding enzyme family. DltA subfamily.

It localises to the cytoplasm. It carries out the reaction holo-[D-alanyl-carrier protein] + D-alanine + ATP = D-alanyl-[D-alanyl-carrier protein] + AMP + diphosphate. It participates in cell wall biogenesis; lipoteichoic acid biosynthesis. In terms of biological role, catalyzes the first step in the D-alanylation of lipoteichoic acid (LTA), the activation of D-alanine and its transfer onto the D-alanyl carrier protein (Dcp) DltC. In an ATP-dependent two-step reaction, forms a high energy D-alanyl-AMP intermediate, followed by transfer of the D-alanyl residue as a thiol ester to the phosphopantheinyl prosthetic group of the Dcp. D-alanylation of LTA plays an important role in modulating the properties of the cell wall in Gram-positive bacteria, influencing the net charge of the cell wall. This is D-alanine--D-alanyl carrier protein ligase from Streptococcus pyogenes serotype M49 (strain NZ131).